A 320-amino-acid chain; its full sequence is Putative polysaccharide deacetylase (320 aa).

The region spanning 69-303 (RSIESCFEYG…ITSKEGVWVA (235 aa)) is the NodB homology domain.

Belongs to the polysaccharide deacetylase family. In terms of assembly, homodimer.

It is found in the prospore. In terms of biological role, may deacetylate chitin. Required for spore formation. In Schizosaccharomyces pombe (strain 972 / ATCC 24843) (Fission yeast), this protein is Putative polysaccharide deacetylase.